A 329-amino-acid chain; its full sequence is Malate dehydrogenase (329 aa).

NAD(+) is bound at residue Gly-12–Gly-18. 2 residues coordinate substrate: Arg-95 and Arg-101. Residues Asn-108, Gln-115, and Val-132–Asn-134 each bind NAD(+). Substrate-binding residues include Asn-134 and Arg-165. His-190 serves as the catalytic Proton acceptor.

This sequence belongs to the LDH/MDH superfamily. MDH type 2 family.

It catalyses the reaction (S)-malate + NAD(+) = oxaloacetate + NADH + H(+). Catalyzes the reversible oxidation of malate to oxaloacetate. This is Malate dehydrogenase from Bordetella petrii (strain ATCC BAA-461 / DSM 12804 / CCUG 43448).